The sequence spans 218 residues: Small ribosomal subunit protein uS3c (218 aa).

The KH type-2 domain maps to 47 to 118; that stretch reads VQKNMRTSSG…KLNIAVTRIA (72 aa).

It belongs to the universal ribosomal protein uS3 family. As to quaternary structure, part of the 30S ribosomal subunit.

The protein resides in the plastid. It localises to the chloroplast. This chain is Small ribosomal subunit protein uS3c (rps3), found in Nicotiana tomentosiformis (Tobacco).